We begin with the raw amino-acid sequence, 233 residues long: Probable chemoreceptor glutamine deamidase CheD (233 aa).

The protein belongs to the CheD family.

The enzyme catalyses L-glutaminyl-[protein] + H2O = L-glutamyl-[protein] + NH4(+). Its function is as follows. Probably deamidates glutamine residues to glutamate on methyl-accepting chemotaxis receptors (MCPs), playing an important role in chemotaxis. The protein is Probable chemoreceptor glutamine deamidase CheD of Ralstonia nicotianae (strain ATCC BAA-1114 / GMI1000) (Ralstonia solanacearum).